Reading from the N-terminus, the 52-residue chain is UPF0181 protein HI_1434.2 (52 aa).

It belongs to the UPF0181 family.

The polypeptide is UPF0181 protein HI_1434.2 (Haemophilus influenzae (strain ATCC 51907 / DSM 11121 / KW20 / Rd)).